The chain runs to 199 residues: FMN-dependent NADH:quinone oxidoreductase 2 (199 aa).

Residues Ser10, Ser16–Ser18, and Met96–Phe99 contribute to the FMN site.

It belongs to the azoreductase type 1 family. Homodimer. FMN serves as cofactor.

The catalysed reaction is 2 a quinone + NADH + H(+) = 2 a 1,4-benzosemiquinone + NAD(+). It carries out the reaction N,N-dimethyl-1,4-phenylenediamine + anthranilate + 2 NAD(+) = 2-(4-dimethylaminophenyl)diazenylbenzoate + 2 NADH + 2 H(+). Quinone reductase that provides resistance to thiol-specific stress caused by electrophilic quinones. Its function is as follows. Also exhibits azoreductase activity. Catalyzes the reductive cleavage of the azo bond in aromatic azo compounds to the corresponding amines. In Pseudomonas fluorescens (strain Pf0-1), this protein is FMN-dependent NADH:quinone oxidoreductase 2.